The following is a 136-amino-acid chain: Large ribosomal subunit protein eL27B (136 aa).

The protein belongs to the eukaryotic ribosomal protein eL27 family. In terms of assembly, component of the large ribosomal subunit (LSU). Mature yeast ribosomes consist of a small (40S) and a large (60S) subunit. The 40S small subunit contains 1 molecule of ribosomal RNA (18S rRNA) and at least 33 different proteins. The large 60S subunit contains 3 rRNA molecules (25S, 5.8S and 5S rRNA) and at least 46 different proteins.

The protein resides in the cytoplasm. Its function is as follows. Component of the ribosome, a large ribonucleoprotein complex responsible for the synthesis of proteins in the cell. The small ribosomal subunit (SSU) binds messenger RNAs (mRNAs) and translates the encoded message by selecting cognate aminoacyl-transfer RNA (tRNA) molecules. The large subunit (LSU) contains the ribosomal catalytic site termed the peptidyl transferase center (PTC), which catalyzes the formation of peptide bonds, thereby polymerizing the amino acids delivered by tRNAs into a polypeptide chain. The nascent polypeptides leave the ribosome through a tunnel in the LSU and interact with protein factors that function in enzymatic processing, targeting, and the membrane insertion of nascent chains at the exit of the ribosomal tunnel. In Schizosaccharomyces pombe (strain 972 / ATCC 24843) (Fission yeast), this protein is Large ribosomal subunit protein eL27B (rpl2702).